The primary structure comprises 435 residues: Histidine--tRNA ligase (435 aa).

Residues 415 to 435 (SVPLSAFPGDYDRPTFEDFAE) are disordered. Basic and acidic residues predominate over residues 424-435 (DYDRPTFEDFAE).

The protein belongs to the class-II aminoacyl-tRNA synthetase family.

It is found in the cytoplasm. The enzyme catalyses tRNA(His) + L-histidine + ATP = L-histidyl-tRNA(His) + AMP + diphosphate + H(+). The polypeptide is Histidine--tRNA ligase (Haloarcula marismortui (strain ATCC 43049 / DSM 3752 / JCM 8966 / VKM B-1809) (Halobacterium marismortui)).